We begin with the raw amino-acid sequence, 297 residues long: Small ribosomal subunit protein uS2 (297 aa).

The segment covering 263 to 289 has biased composition (low complexity); sequence AAPTSWEADGGDWAASSAAPAGESWAE. The tract at residues 263-297 is disordered; it reads AAPTSWEADGGDWAASSAAPAGESWAETQPAEAKW.

The protein belongs to the universal ribosomal protein uS2 family. Component of the small ribosomal subunit. Mature ribosomes consist of a small (40S) and a large (60S) subunit. The 40S subunit contains about 33 different proteins and 1 molecule of RNA (18S). The 60S subunit contains about 49 different proteins and 3 molecules of RNA (25S, 5.8S and 5S). Interacts with rps21.

The protein localises to the cytoplasm. In terms of biological role, required for the assembly and/or stability of the 40S ribosomal subunit. Required for the processing of the 20S rRNA-precursor to mature 18S rRNA in a late step of the maturation of 40S ribosomal subunits. In Neosartorya fischeri (strain ATCC 1020 / DSM 3700 / CBS 544.65 / FGSC A1164 / JCM 1740 / NRRL 181 / WB 181) (Aspergillus fischerianus), this protein is Small ribosomal subunit protein uS2 (rps0).